Here is a 254-residue protein sequence, read N- to C-terminus: Small ribosomal subunit protein uS5 (254 aa).

The segment covering 1–10 (MSAPEAQQQK) has biased composition (polar residues). The tract at residues 1–34 (MSAPEAQQQKRGGFGGRNRGRPNRRGPRNTEEKG) is disordered. Serine 2 carries the post-translational modification N-acetylserine. The residue at position 11 (arginine 11) is an Asymmetric dimethylarginine; by HMT1; alternate. Arginine 11 is subject to Omega-N-methylarginine; by HMT1; alternate. Residue arginine 17 is modified to Omega-N-methylarginine; by HMT1. The segment covering 18 to 27 (NRGRPNRRGP) has biased composition (basic residues). A Glycyl lysine isopeptide (Lys-Gly) (interchain with G-Cter in ubiquitin) cross-link involves residue lysine 33. The S5 DRBM domain maps to 76–139 (LQDEVMNIKP…IIAKLSVIPI (64 aa)).

The protein belongs to the universal ribosomal protein uS5 family. In terms of assembly, component of the small ribosomal subunit (SSU). Mature yeast ribosomes consist of a small (40S) and a large (60S) subunit. The 40S small subunit contains 1 molecule of ribosomal RNA (18S rRNA) and 33 different proteins (encoded by 57 genes). The large 60S subunit contains 3 rRNA molecules (25S, 5.8S and 5S rRNA) and 46 different proteins (encoded by 81 genes). Interacts with snoRNA U3. Interacts with MPP10. Component of the ribosomal small subunit (SSU) processome composed of at least 40 protein subunits and snoRNA U3. N-terminally acetylated by acetyltransferase NatA.

The protein localises to the cytoplasm. Its subcellular location is the nucleus. The protein resides in the nucleolus. Component of the ribosome, a large ribonucleoprotein complex responsible for the synthesis of proteins in the cell. The small ribosomal subunit (SSU) binds messenger RNAs (mRNAs) and translates the encoded message by selecting cognate aminoacyl-transfer RNA (tRNA) molecules. The large subunit (LSU) contains the ribosomal catalytic site termed the peptidyl transferase center (PTC), which catalyzes the formation of peptide bonds, thereby polymerizing the amino acids delivered by tRNAs into a polypeptide chain. The nascent polypeptides leave the ribosome through a tunnel in the LSU and interact with protein factors that function in enzymatic processing, targeting, and the membrane insertion of nascent chains at the exit of the ribosomal tunnel. uS5 is important for the assembly and function of the 40S ribosomal subunit. Mutations in this protein affects the control of translational fidelity. Involved in nucleolar processing of pre-18S ribosomal RNA and ribosome assembly. The protein is Small ribosomal subunit protein uS5 of Saccharomyces cerevisiae (strain ATCC 204508 / S288c) (Baker's yeast).